The chain runs to 168 residues: Disulfide bond formation protein B 1 (168 aa).

Topologically, residues 1–14 are cytoplasmic; the sequence is MNEQTSRLNRERRF. Residues 15 to 31 form a helical membrane-spanning segment; it reads LVLLGLICLSLIGGALY. The Periplasmic portion of the chain corresponds to 32–49; that stretch reads MQVVLGEAPCPLCILQRY. The cysteines at positions 41 and 44 are disulfide-linked. The helical transmembrane segment at 50-65 threads the bilayer; the sequence is ALLFIAVFAFIAAAMP. At 66 to 72 the chain is on the cytoplasmic side; it reads GRRSLTF. The helical transmembrane segment at 73–89 threads the bilayer; that stretch reads FEALVVLSAIGGIVAAG. Residues 90–144 are Periplasmic-facing; sequence NHVYILANPMVSCGIDTLQPIVDDLPLAKLWPLAFQVDGFCSTPYPPILGLSLAQ. C102 and C130 are oxidised to a cystine. A helical transmembrane segment spans residues 145-163; the sequence is WALVAFVLTAVLVPLGIYR. Residues 164 to 168 are Cytoplasmic-facing; it reads NRRQA.

It belongs to the DsbB family.

The protein resides in the cell inner membrane. Functionally, required for disulfide bond formation in some periplasmic proteins. Acts by oxidizing the DsbA protein. This Pseudomonas putida (strain ATCC 47054 / DSM 6125 / CFBP 8728 / NCIMB 11950 / KT2440) protein is Disulfide bond formation protein B 1 (dsbB1).